Reading from the N-terminus, the 350-residue chain is Xylene/toluene monooxygenase electron transfer component XylA (350 aa).

Residues P16–L108 enclose the 2Fe-2S ferredoxin-type domain. Residues C52, C57, C60, and C92 each contribute to the [2Fe-2S] cluster site. The segment at G109 to C350 is ferredoxin--NADH reductase. The FAD-binding FR-type domain maps to P114–H213.

It belongs to the bacterial ring-hydroxylating dioxygenase ferredoxin reductase family. Monomer. The xylene/toluene monooxygenase is composed of two subunits: the electron transfer component XylA and the hydroxylase component XylM. FAD is required as a cofactor. The cofactor is [2Fe-2S] cluster.

The protein localises to the cell inner membrane. It carries out the reaction 2 reduced [2Fe-2S]-[ferredoxin] + NAD(+) + H(+) = 2 oxidized [2Fe-2S]-[ferredoxin] + NADH. Its activity is regulated as follows. The reductase activity is completely inhibited by quercetin (a common inhibitor of mammalian oxidoreductases) and p-chloromercuribenzoate, but not by iodoacetimide, N-ethylmaleimide and pyrrazole. Its function is as follows. Component of a monooxygenase that catalyzes the first step in the degradation of xylenes and toluenes. XylA is responsible for the transport of electrons from the electron donor NADH to the terminal hydroxylase component, XylM. The protein is Xylene/toluene monooxygenase electron transfer component XylA of Pseudomonas putida (Arthrobacter siderocapsulatus).